The sequence spans 1461 residues: MAAGGGGGSSKASSSSASSAGALESSLDRKFQSVTNTMESIQGLSSWCIENKKHHSTIVYHWMKWLRRSAYPHRLNLFYLANDVIQNCKRKNAIIFRESFADVLPEAAALVKDPSVSKSVERIFKIWEDRNVYPEEMIVALREALSTTFKTQKQLKENLNKQPNKQWKKSQTSTNPKAALKSKIVAEFRSQALIEELLLYKRSEDQIELKEKQLSTMRVDVCSTETLKCLKDKTGGKKFSKEFEEASSKLEEFVNGLDKQVKNGPSLTEALENAGIFYEAQYKEVKVVANAYKTFANRVNNLKKKLDQLKSTLPDPEESPVPSPSMDAPSPTGSESPFQGMGGEESQSPTMESEKSATPEPVTDNRDVEDMELSDVEDDGSKIIVEDRKEKPAEKSAVSTSVPTKPTENISKASSCTPVPVTMTATPPLPKPVNTSLSPSPALALPNLANVDLAKISSILSSLTSVMKNTGVSPASRPSPGTPTSPSNLTSGLKTPAPATTTSHNPLANILSKVEITPESILSALSKTQTQSAPALQGLSSLLQSVTGNPVPASEAASQSTSASPANTTVSTIKGRNLPSSAQPFIPKSFNYSPNSSTSEVSSTSASKASIGQSPGLPSTTFKLPSNSLGFTATHNTSPAAPPTEVTICQSSEVSKPKLESESTSPSLEMKIHNFLKGNPGFSGLNLNIPILSSLGSSAPSESHPSDFQRGPTSTSIDNIDGTPVRDERSGTPTQDEMMDKPTSSSVDTMSLLSKIISPGSSTPSSTRSPPPGRDESYPRELSNSVSTYRPFGLGSESPYKQPSDGMERPSSLMDSSQEKFYPDTSFQEDEDYRDFEYSGPPPSAMMNLEKKPAKSILKSSKLSDTTEYQPILSSYSHRAQEFGVKSAFPPSVRALLDSSENCDRLSSSPGLFGAFSVRGNEPGSDRSPSPSKNDSFFTPDSNHNSLSQSTTGHLSLPQKQYPDSPHPVPHRSLFSPQNTLAAPTGHPPTSGVEKVLASTISTTSTIEFKNMLKNASRKPSDDKHFGQAPSKGTPSDGVSLSNLTQPSLTATDQQQQEEHYRIETRVSSSCLDLPDSTEEKGAPIETLGYHSASNRRMSGEPIQTVESIRVPGKGNRGHGREASRVGWFDLSTSGSSFDNGPSSASELASLGGGGSGGLTGFKTAPYKERAPQFQESVGSFRSNSFNSTFEHHLPPSPLEHGTPFQREPVGPSSAPPVPPKDHGGIFSRDAPTHLPSVDLSNPFTKEAALAHAAPPPPPGEHSGIPFPTPPPPPPPGEHSSSGGSGVPFSTPPPPPPPVDHSGVVPFPAPPLAEHGVAGAVAVFPKDHSSLLQGTLAEHFGVLPGPRDHGGPTQRDLNGPGLSRVRESLTLPSHSLEHLGPPHGGGGGGGSNSSSGPPLGPSHRDTISRSGIILRSPRPDFRPREPFLSRDPFHSLKRPRPPFARGPPFFAPKRPFFPPRY.

A2 is subject to N-acetylalanine. S16 carries the phosphoserine modification. One can recognise a CID domain in the interval S19 to F149. 2 disordered regions span residues S311 to S438 and N469 to H504. Over residues E352–V368 the composition is skewed to basic and acidic residues. S356 carries the phosphoserine modification. At T358 the chain carries Phosphothreonine. The span at E369–D378 shows a compositional bias: acidic residues. Phosphoserine is present on S374. The span at D379–E394 shows a compositional bias: basic and acidic residues. The span at A397 to C416 shows a compositional bias: polar residues. Composition is skewed to low complexity over residues T417–T426 and S473–S491. S473, S476, and S479 each carry phosphoserine. T482 carries the phosphothreonine modification. S485 is modified (phosphoserine). T517 bears the Phosphothreonine mark. The disordered stretch occupies residues T547 to K623. Positions A553–A566 are enriched in low complexity. S564 carries the post-translational modification Phosphoserine. Over residues N567–Q583 the composition is skewed to polar residues. Position 593 is a phosphoserine (S593). Positions S593–S614 are enriched in low complexity. At T598 the chain carries Phosphothreonine. A phosphoserine mark is found at S614, S663, S665, and S716. Disordered stretches follow at residues G696 to L849, S900 to L997, A1016 to P1102, S1132 to L1312, and F1340 to Y1461. Phosphothreonine is present on T723. The residue at position 730 (S730) is a Phosphoserine. Position 732 is a phosphothreonine (T732). Over residues P742–L752 the composition is skewed to polar residues. Phosphoserine is present on residues S758 and S762. Positions S758 to R768 are enriched in low complexity. A Phosphothreonine modification is found at T763. Phosphoserine occurs at positions 769, 817, 826, 900, 909, 928, 965, and 976. Positions R927 to H954 are enriched in polar residues. Residues S1031–Q1055 show a composition bias toward polar residues. 2 positions are modified to phosphoserine: S1068 and S1099. The span at G1141–S1150 shows a compositional bias: low complexity. The span at L1151 to T1160 shows a compositional bias: gly residues. Polar residues predominate over residues F1174–T1189. Pro residues-rich tracts occupy residues F1267–G1277 and S1290–V1299. The residue at position 1366 (R1366) is an Asymmetric dimethylarginine. The span at P1382 to S1391 shows a compositional bias: gly residues. Residues P1417–H1434 show a composition bias toward basic and acidic residues. Asymmetric dimethylarginine is present on residues R1424 and R1430.

Associates with the RNA polymerase II complex.

The chain is Regulation of nuclear pre-mRNA domain-containing protein 2 (RPRD2) from Homo sapiens (Human).